A 276-amino-acid polypeptide reads, in one-letter code: Palmitoyltransferase ZDHHC22 (276 aa).

The Cytoplasmic portion of the chain corresponds to 1–9 (MGKLKLLNT). The chain crosses the membrane as a helical span at residues 10–30 (IAPAYFYAATVVTFALHFLLF). The Lumenal segment spans residues 31–45 (TPTIFQSSDVTINPA). The chain crosses the membrane as a helical span at residues 46–66 (MLAHISIFLFLMGNALGNYIM). Over 67–131 (TIRNPSESAN…NCIGNRNMRY (65 aa)) the chain is Cytoplasmic. In terms of domain architecture, DHHC spans 101 to 137 (HFCKVCKKVILKRDHHCFFTGNCIGNRNMRYFIMFSI). Cys-117 serves as the catalytic S-palmitoyl cysteine intermediate. A helical transmembrane segment spans residues 132–152 (FIMFSIYTSSSCLYSLVIGVA). Residues 153–165 (YLTIEYSISFENP) are Lumenal-facing. A helical membrane pass occupies residues 166–186 (LTFLTLLPLSTGYFFLGLISG). At 187-188 (LQ) the chain is on the cytoplasmic side. The helical transmembrane segment at 189–209 (FFLVIMLYIWLGIGLVSVGFC) threads the bilayer. At 210 to 276 (CQQLLLVARG…WQVYHDHKHD (67 aa)) the chain is on the lumenal side.

Belongs to the DHHC palmitoyltransferase family.

The protein resides in the endoplasmic reticulum membrane. Its subcellular location is the golgi apparatus membrane. The catalysed reaction is L-cysteinyl-[protein] + hexadecanoyl-CoA = S-hexadecanoyl-L-cysteinyl-[protein] + CoA. Functionally, palmitoyltransferase that could catalyze the addition of palmitate onto various protein substrates and be involved in a variety of cellular processes. This Danio rerio (Zebrafish) protein is Palmitoyltransferase ZDHHC22 (zdhhc22).